The chain runs to 86 residues: MKTLLLTLVVVTILCLDLGYTLTCLTHESLFFETTETCSDGQNLCYAKWFAVFPGARRPDGGCAATCPDKVPLEIVNCCTTDKCNL.

The N-terminal stretch at 1 to 21 (MKTLLLTLVVVTILCLDLGYT) is a signal peptide. Disulfide bonds link Cys24-Cys45, Cys38-Cys63, Cys67-Cys78, and Cys79-Cys84.

This sequence belongs to the three-finger toxin family. Short-chain subfamily. Aminergic toxin sub-subfamily. In terms of assembly, monomer. Expressed by the venom gland.

The protein resides in the secreted. Binds to the muscarinic acetylcholine receptor (CHRM). The protein is Muscarinic toxin MTX6 of Ophiophagus hannah (King cobra).